Reading from the N-terminus, the 436-residue chain is 3-phosphoshikimate 1-carboxyvinyltransferase (436 aa).

3-phosphoshikimate is bound by residues Lys23, Ser24, and Arg28. Lys23 is a phosphoenolpyruvate binding site. Phosphoenolpyruvate is bound by residues Gly97 and Arg126. 4 residues coordinate 3-phosphoshikimate: Ser171, Gln173, Asp323, and Lys350. Gln173 contacts phosphoenolpyruvate. The Proton acceptor role is filled by Asp323. The phosphoenolpyruvate site is built by Arg354 and Arg396.

Belongs to the EPSP synthase family. As to quaternary structure, monomer.

The protein localises to the cytoplasm. The catalysed reaction is 3-phosphoshikimate + phosphoenolpyruvate = 5-O-(1-carboxyvinyl)-3-phosphoshikimate + phosphate. It participates in metabolic intermediate biosynthesis; chorismate biosynthesis; chorismate from D-erythrose 4-phosphate and phosphoenolpyruvate: step 6/7. Functionally, catalyzes the transfer of the enolpyruvyl moiety of phosphoenolpyruvate (PEP) to the 5-hydroxyl of shikimate-3-phosphate (S3P) to produce enolpyruvyl shikimate-3-phosphate and inorganic phosphate. The chain is 3-phosphoshikimate 1-carboxyvinyltransferase from Prochlorococcus marinus (strain MIT 9301).